A 1790-amino-acid chain; its full sequence is Vitellogenin (1790 aa).

An N-terminal signal peptide occupies residues 1-19 (MWSTVALCLLVGLSYVSSS). A Vitellogenin domain is found at 23 to 799 (WKDNTEYVYS…SAESSFPKIM (777 aa)). N-linked (GlcNAc...) asparagine glycans are attached at residues Asn219 and Asn297. Residues 342–353 (LMEDSSSEESSE) are compositionally biased toward acidic residues. A disordered region spans residues 342–400 (LMEDSSSEESSEQEMTHRRFRRSANSLTKQWRESSEEWNQQQQQPRPQLTRAPHSPLLP). Over residues 378–389 (EWNQQQQQPRPQ) the composition is skewed to low complexity. N-linked (GlcNAc...) asparagine glycosylation is found at Asn554, Asn573, Asn893, Asn1345, Asn1416, Asn1430, Asn1480, Asn1699, and Asn1735. Residues 1466 to 1675 (PTCVIDQTTA…SYQVEKGQQW (210 aa)) enclose the VWFD domain. A disulfide bond links Cys1468 and Cys1638.

Its subcellular location is the secreted. Precursor of the egg-yolk proteins that are sources of nutrients during embryonic development. This chain is Vitellogenin (VTG), found in Anthonomus grandis (Mexican cotton boll weevil).